Reading from the N-terminus, the 400-residue chain is Enoyl-[acyl-carrier-protein] reductase [NADH] (400 aa).

NAD(+) contacts are provided by residues 48–53 (GASTGY), 74–75 (FE), 111–112 (DA), and 139–140 (LA). Residue Tyr-225 participates in substrate binding. The active-site Proton donor is the Tyr-235. Residues Lys-244 and 273–275 (VVT) each bind NAD(+).

This sequence belongs to the TER reductase family. In terms of assembly, monomer.

The enzyme catalyses a 2,3-saturated acyl-[ACP] + NAD(+) = a (2E)-enoyl-[ACP] + NADH + H(+). The protein operates within lipid metabolism; fatty acid biosynthesis. Functionally, involved in the final reduction of the elongation cycle of fatty acid synthesis (FAS II). Catalyzes the reduction of a carbon-carbon double bond in an enoyl moiety that is covalently linked to an acyl carrier protein (ACP). In Burkholderia lata (strain ATCC 17760 / DSM 23089 / LMG 22485 / NCIMB 9086 / R18194 / 383), this protein is Enoyl-[acyl-carrier-protein] reductase [NADH].